A 338-amino-acid polypeptide reads, in one-letter code: Fructose-1,6-bisphosphatase 1 (338 aa).

Alanine 2 carries the post-translational modification N-acetylalanine. AMP contacts are provided by residues 18 to 22 (VMEQG) and 28 to 32 (TGELT). Residues aspartate 69 and glutamate 98 each contribute to the Mg(2+) site. 113-114 (KY) provides a ligand contact to AMP. Residues aspartate 119, leucine 121, and aspartate 122 each coordinate Mg(2+). 122-125 (DGSS) is a binding site for substrate. Arginine 141 serves as a coordination point for AMP. Lysine 151 is modified (N6-succinyllysine). Substrate is bound by residues 213–216 (NEGY), 244–249 (RYVGSM), tyrosine 265, and 275–277 (KLR). A phosphotyrosine mark is found at tyrosine 216, tyrosine 245, and tyrosine 265. A Mg(2+)-binding site is contributed by glutamate 281.

It belongs to the FBPase class 1 family. In terms of assembly, homotetramer. The cofactor is Mg(2+). In terms of tissue distribution, detected in pancreatic beta-cell lines MIN6 and beta-TC and in liver (at protein level). Preferentially expressed in liver, with lower levels detected in pancreatic islets and intestine, and very low levels in blood, muscle, brain and spleen.

It carries out the reaction beta-D-fructose 1,6-bisphosphate + H2O = beta-D-fructose 6-phosphate + phosphate. Its pathway is carbohydrate biosynthesis; gluconeogenesis. Subject to complex allosteric regulation. The enzyme can assume an active R-state, or an inactive T-state. Intermediate conformations may exist. AMP acts as an allosteric inhibitor. AMP binding affects the turnover of bound substrate and not the affinity for substrate. Fructose 2,6-bisphosphate acts as a competitive inhibitor. Fructose 2,6-bisphosphate and AMP have synergistic effects. Catalyzes the hydrolysis of fructose 1,6-bisphosphate to fructose 6-phosphate in the presence of divalent cations, acting as a rate-limiting enzyme in gluconeogenesis. Plays a role in regulating glucose sensing and insulin secretion of pancreatic beta-cells. Appears to modulate glycerol gluconeogenesis in liver. Important regulator of appetite and adiposity; increased expression of the protein in liver after nutrient excess increases circulating satiety hormones and reduces appetite-stimulating neuropeptides and thus seems to provide a feedback mechanism to limit weight gain. This chain is Fructose-1,6-bisphosphatase 1 (Fbp1), found in Mus musculus (Mouse).